A 185-amino-acid polypeptide reads, in one-letter code: Ethylene-responsive transcription factor ERF017 (185 aa).

A DNA-binding region (AP2/ERF) is located at residues 11 to 68 (KYKGVRKRKWGKWVSEIRLPNSRERIWLGSYDTPEKAARAFDAALYCLRGNNAKFNFP).

It belongs to the AP2/ERF transcription factor family. ERF subfamily.

It is found in the nucleus. In terms of biological role, probably acts as a transcriptional activator. Binds to the GCC-box pathogenesis-related promoter element. May be involved in the regulation of gene expression by stress factors and by components of stress signal transduction pathways. The chain is Ethylene-responsive transcription factor ERF017 (ERF017) from Arabidopsis thaliana (Mouse-ear cress).